The primary structure comprises 366 residues: DNA-directed RNA polymerase subunit alpha (366 aa).

The alpha N-terminal domain (alpha-NTD) stretch occupies residues 1-233 (MVREKVRVST…DLFLPFLHAE (233 aa)). The interval 264–366 (KNEIALKSIF…KDEMGFESLE (103 aa)) is alpha C-terminal domain (alpha-CTD).

The protein belongs to the RNA polymerase alpha chain family. In plastids the minimal PEP RNA polymerase catalytic core is composed of four subunits: alpha, beta, beta', and beta''. When a (nuclear-encoded) sigma factor is associated with the core the holoenzyme is formed, which can initiate transcription.

The protein resides in the plastid. It localises to the chloroplast. The catalysed reaction is RNA(n) + a ribonucleoside 5'-triphosphate = RNA(n+1) + diphosphate. Functionally, DNA-dependent RNA polymerase catalyzes the transcription of DNA into RNA using the four ribonucleoside triphosphates as substrates. This chain is DNA-directed RNA polymerase subunit alpha, found in Oenothera elata subsp. hookeri (Hooker's evening primrose).